The sequence spans 703 residues: Elongation factor G (703 aa).

Residues 10–286 form the tr-type G domain; sequence NKVRNIGIMA…AVVKFLPSPL (277 aa). GTP is bound by residues 19–26, 83–87, and 137–140; these read AHIDAGKT, DTPGH, and NKLD.

It belongs to the TRAFAC class translation factor GTPase superfamily. Classic translation factor GTPase family. EF-G/EF-2 subfamily.

It is found in the cytoplasm. Catalyzes the GTP-dependent ribosomal translocation step during translation elongation. During this step, the ribosome changes from the pre-translocational (PRE) to the post-translocational (POST) state as the newly formed A-site-bound peptidyl-tRNA and P-site-bound deacylated tRNA move to the P and E sites, respectively. Catalyzes the coordinated movement of the two tRNA molecules, the mRNA and conformational changes in the ribosome. This Nocardioides sp. (strain ATCC BAA-499 / JS614) protein is Elongation factor G.